Reading from the N-terminus, the 411-residue chain is Adenylosuccinate synthetase (411 aa).

GTP-binding positions include 11–17 (GDEGKGK) and 39–41 (GHT). The active-site Proton acceptor is the aspartate 12. The Mg(2+) site is built by aspartate 12 and glycine 39. IMP-binding positions include 12 to 15 (DEGK), 37 to 40 (NAGH), threonine 121, arginine 135, glutamine 215, threonine 230, and arginine 294. The active-site Proton donor is the histidine 40. 290–296 (TTTKRPR) is a binding site for substrate. Residues arginine 296, 322 to 324 (KLD), and 400 to 402 (STS) contribute to the GTP site.

It belongs to the adenylosuccinate synthetase family. Homodimer. Mg(2+) is required as a cofactor.

The protein resides in the cytoplasm. It catalyses the reaction IMP + L-aspartate + GTP = N(6)-(1,2-dicarboxyethyl)-AMP + GDP + phosphate + 2 H(+). Its pathway is purine metabolism; AMP biosynthesis via de novo pathway; AMP from IMP: step 1/2. In terms of biological role, plays an important role in the de novo pathway of purine nucleotide biosynthesis. Catalyzes the first committed step in the biosynthesis of AMP from IMP. The chain is Adenylosuccinate synthetase from Helicobacter pylori (strain G27).